Reading from the N-terminus, the 198-residue chain is Small ribosomal subunit protein uS11 (198 aa).

Composition is skewed to low complexity over residues 1–11 (MSGTEAGAGEP) and 19–58 (EAAQ…TAQP). 2 disordered regions span residues 1–72 (MSGT…TPAD) and 178–198 (DVTP…GRRV). The segment covering 187-198 (TRKKGGKRGRRV) has biased composition (basic residues).

The protein belongs to the universal ribosomal protein uS11 family. In terms of assembly, part of the 30S ribosomal subunit.

Functionally, located on the platform of the 30S subunit. This Cenarchaeum symbiosum (strain A) protein is Small ribosomal subunit protein uS11.